The following is a 583-amino-acid chain: Peptidyl-prolyl cis-trans isomerase FKBP10 (583 aa).

Positions 1–27 (MLRAGPPSHTLLRLPLLQLLLLLLVQA) are cleaved as a signal peptide. PPIase FKBP-type domains lie at 63-151 (GDFV…LDVW), 175-263 (SDFV…IDVH), 287-375 (GDFM…IDFH), and 400-487 (GDFV…VSRE). 3 N-linked (GlcNAc...) asparagine glycosylation sites follow: Asn71, Asn183, and Asn295. EF-hand domains are found at residues 498–533 (WHEDPPAHLFEHMDLNKDGEVPVEEFSTFIKAQVSE) and 543–578 (DPEKTIGDMFQNQDRNQDGKITAEELKLKSDEDQDR). 10 residues coordinate Ca(2+): Asp511, Asn513, Asp515, Glu517, Glu522, Asp556, Asn558, Asp560, Lys562, and Glu567. The disordered stretch occupies residues 534-583 (GKGRLLPGQDPEKTIGDMFQNQDRNQDGKITAEELKLKSDEDQDRVHEEL). Basic and acidic residues predominate over residues 557 to 583 (RNQDGKITAEELKLKSDEDQDRVHEEL). The Prevents secretion from ER motif lies at 580 to 583 (HEEL).

In terms of processing, glycosylated and phosphorylated.

It is found in the endoplasmic reticulum lumen. It carries out the reaction [protein]-peptidylproline (omega=180) = [protein]-peptidylproline (omega=0). Inhibited by both FK506 and rapamycin, but not by cyclosporin A. Functionally, PPIases accelerate the folding of proteins during protein synthesis. The chain is Peptidyl-prolyl cis-trans isomerase FKBP10 (FKBP10) from Bos taurus (Bovine).